The following is a 109-amino-acid chain: Large ribosomal subunit protein uL22 (109 aa).

Belongs to the universal ribosomal protein uL22 family. In terms of assembly, part of the 50S ribosomal subunit.

Its function is as follows. This protein binds specifically to 23S rRNA; its binding is stimulated by other ribosomal proteins, e.g. L4, L17, and L20. It is important during the early stages of 50S assembly. It makes multiple contacts with different domains of the 23S rRNA in the assembled 50S subunit and ribosome. Functionally, the globular domain of the protein is located near the polypeptide exit tunnel on the outside of the subunit, while an extended beta-hairpin is found that lines the wall of the exit tunnel in the center of the 70S ribosome. The protein is Large ribosomal subunit protein uL22 of Dechloromonas aromatica (strain RCB).